The sequence spans 222 residues: Histidine biosynthesis bifunctional protein HisIE (222 aa).

Positions 1–128 are phosphoribosyl-AMP cyclohydrolase; it reads MQPLSPAFID…SNALSPPADA (128 aa). A phosphoribosyl-ATP pyrophosphohydrolase region spans residues 129 to 222; it reads CTELFRVIES…AARRGAPRRH (94 aa).

This sequence in the N-terminal section; belongs to the PRA-CH family. It in the C-terminal section; belongs to the PRA-PH family.

The protein localises to the cytoplasm. The catalysed reaction is 1-(5-phospho-beta-D-ribosyl)-ATP + H2O = 1-(5-phospho-beta-D-ribosyl)-5'-AMP + diphosphate + H(+). It carries out the reaction 1-(5-phospho-beta-D-ribosyl)-5'-AMP + H2O = 1-(5-phospho-beta-D-ribosyl)-5-[(5-phospho-beta-D-ribosylamino)methylideneamino]imidazole-4-carboxamide. The protein operates within amino-acid biosynthesis; L-histidine biosynthesis; L-histidine from 5-phospho-alpha-D-ribose 1-diphosphate: step 2/9. Its pathway is amino-acid biosynthesis; L-histidine biosynthesis; L-histidine from 5-phospho-alpha-D-ribose 1-diphosphate: step 3/9. The polypeptide is Histidine biosynthesis bifunctional protein HisIE (Parasynechococcus marenigrum (strain WH8102)).